The sequence spans 384 residues: 4-hydroxy-3-methylbut-2-en-1-yl diphosphate synthase (flavodoxin) (384 aa).

Positions 280, 283, 315, and 322 each coordinate [4Fe-4S] cluster.

This sequence belongs to the IspG family. [4Fe-4S] cluster serves as cofactor.

The catalysed reaction is (2E)-4-hydroxy-3-methylbut-2-enyl diphosphate + oxidized [flavodoxin] + H2O + 2 H(+) = 2-C-methyl-D-erythritol 2,4-cyclic diphosphate + reduced [flavodoxin]. It participates in isoprenoid biosynthesis; isopentenyl diphosphate biosynthesis via DXP pathway; isopentenyl diphosphate from 1-deoxy-D-xylulose 5-phosphate: step 5/6. Converts 2C-methyl-D-erythritol 2,4-cyclodiphosphate (ME-2,4cPP) into 1-hydroxy-2-methyl-2-(E)-butenyl 4-diphosphate. The polypeptide is 4-hydroxy-3-methylbut-2-en-1-yl diphosphate synthase (flavodoxin) (Frankia alni (strain DSM 45986 / CECT 9034 / ACN14a)).